We begin with the raw amino-acid sequence, 103 residues long: Large ribosomal subunit protein bL21 (103 aa).

It belongs to the bacterial ribosomal protein bL21 family. As to quaternary structure, part of the 50S ribosomal subunit. Contacts protein L20.

Functionally, this protein binds to 23S rRNA in the presence of protein L20. The protein is Large ribosomal subunit protein bL21 of Bordetella parapertussis (strain 12822 / ATCC BAA-587 / NCTC 13253).